Here is a 279-residue protein sequence, read N- to C-terminus: tRNA uridine(34) hydroxylase (279 aa).

The Rhodanese domain maps to 126–221; sequence TKPGMHVIDT…YLQSVKGADS (96 aa). Residue Cys-181 is the Cysteine persulfide intermediate of the active site.

Belongs to the TrhO family.

It carries out the reaction uridine(34) in tRNA + AH2 + O2 = 5-hydroxyuridine(34) in tRNA + A + H2O. Its function is as follows. Catalyzes oxygen-dependent 5-hydroxyuridine (ho5U) modification at position 34 in tRNAs. The chain is tRNA uridine(34) hydroxylase from Anaplasma phagocytophilum (strain HZ).